We begin with the raw amino-acid sequence, 301 residues long: Developmental pluripotency-associated protein 2 (301 aa).

The segment at 31 to 85 (KEEEEPNTDYATQSNVSSSTLDHTPPARSLVRHAGIKHPTRTIPSTCPPPSLPPI) is disordered. Over residues 39–52 (DYATQSNVSSSTLD) the composition is skewed to polar residues. A compositionally biased stretch (basic residues) spans 60–70 (LVRHAGIKHPT). An SAP domain is found at 85–119 (IRDVSRNTLREWCRYHNLSTDGKKVEVYLRLRRHS).

Interacts with DPPA4. In terms of tissue distribution, not detected in adult tissues.

It localises to the nucleus. Binds to target gene promoters, including NKX2-5 and SYCE1, but not GATA4, and may be involved in the maintenance of the active epigenetic status of these genes. This Mus musculus (Mouse) protein is Developmental pluripotency-associated protein 2 (Dppa2).